Here is a 20-residue protein sequence, read N- to C-terminus: DnaJ homolog subfamily C member 1 (20 aa).

Over 1-20 the chain is Lumenal; it reads WESGDLELFDLVEEVXLNFY. One can recognise a J domain in the interval 18 to 20; sequence NFY.

Interacts (via SANT 2 domain) with SERPINA3; the interaction delays the formation of the covalent inhibitory complex SERPINA3-chymotrypsin, but does not alter the catalytic activity of SERPINA3. Interacts (via SANT 2 domain) with ITIH4 (via C-terminus); the interaction protects ITIH4 against in vitro cleavage by kallikrein. Interacts (via J domain) with HSPA5. Interacts (via cytosolic domain) with ribosomes.

Its subcellular location is the endoplasmic reticulum membrane. It is found in the nucleus membrane. The protein resides in the microsome membrane. This chain is DnaJ homolog subfamily C member 1 (DNAJC1), found in Canis lupus familiaris (Dog).